Here is a 549-residue protein sequence, read N- to C-terminus: Pyrophosphate--fructose 6-phosphate 1-phosphotransferase (549 aa).

G78 serves as a coordination point for diphosphate. D172 serves as a coordination point for Mg(2+). Substrate-binding positions include 200–202, 239–240, 247–249, E308, and 421–424; these read TID, KY, MGR, and YEGR. D202 serves as the catalytic Proton acceptor.

Belongs to the phosphofructokinase type A (PFKA) family. PPi-dependent PFK group II subfamily. Clade 'Long' sub-subfamily. Homodimer. The cofactor is Mg(2+).

Its subcellular location is the cytoplasm. The enzyme catalyses beta-D-fructose 6-phosphate + diphosphate = beta-D-fructose 1,6-bisphosphate + phosphate + H(+). Its pathway is carbohydrate degradation; glycolysis; D-glyceraldehyde 3-phosphate and glycerone phosphate from D-glucose: step 3/4. Non-allosteric. In terms of biological role, catalyzes the phosphorylation of D-fructose 6-phosphate, the first committing step of glycolysis. Uses inorganic phosphate (PPi) as phosphoryl donor instead of ATP like common ATP-dependent phosphofructokinases (ATP-PFKs), which renders the reaction reversible, and can thus function both in glycolysis and gluconeogenesis. Consistently, PPi-PFK can replace the enzymes of both the forward (ATP-PFK) and reverse (fructose-bisphosphatase (FBPase)) reactions. This chain is Pyrophosphate--fructose 6-phosphate 1-phosphotransferase, found in Porphyromonas gingivalis (Bacteroides gingivalis).